We begin with the raw amino-acid sequence, 172 residues long: Shikimate kinase (172 aa).

14–19 (GAGKST) provides a ligand contact to ATP. Serine 18 is a Mg(2+) binding site. 3 residues coordinate substrate: aspartate 36, arginine 60, and glycine 82. Arginine 120 provides a ligand contact to ATP. Arginine 140 serves as a coordination point for substrate. Residue glutamine 157 participates in ATP binding.

It belongs to the shikimate kinase family. As to quaternary structure, monomer. The cofactor is Mg(2+).

Its subcellular location is the cytoplasm. It carries out the reaction shikimate + ATP = 3-phosphoshikimate + ADP + H(+). The protein operates within metabolic intermediate biosynthesis; chorismate biosynthesis; chorismate from D-erythrose 4-phosphate and phosphoenolpyruvate: step 5/7. In terms of biological role, catalyzes the specific phosphorylation of the 3-hydroxyl group of shikimic acid using ATP as a cosubstrate. The chain is Shikimate kinase from Aeromonas salmonicida (strain A449).